A 123-amino-acid chain; its full sequence is Small ribosomal subunit protein uS12cz/uS12cy (123 aa).

Belongs to the universal ribosomal protein uS12 family. Part of the 30S ribosomal subunit.

It localises to the plastid. The protein resides in the chloroplast. In terms of biological role, with S4 and S5 plays an important role in translational accuracy. Located at the interface of the 30S and 50S subunits. The polypeptide is Small ribosomal subunit protein uS12cz/uS12cy (rps12-A) (Nandina domestica (Heavenly bamboo)).